A 158-amino-acid polypeptide reads, in one-letter code: MARMHARKRGKSGSKRPPRTAPPIWVEYTVEEIENLVVKLRKEGYSTAMIGTILRDQYGIPSVKLFKDPDNPNRNLTITRILEKHGLAPEIPEDLMFLIRRAVNLRKHLEQHPKDLHSMRGLQLIESKIRRLVKYYKRKGKLPKNWRYDPETAKLLVR.

Over residues 1 to 18 the composition is skewed to basic residues; that stretch reads MARMHARKRGKSGSKRPP. The disordered stretch occupies residues 1–21; the sequence is MARMHARKRGKSGSKRPPRTA.

Belongs to the universal ribosomal protein uS15 family. In terms of assembly, part of the 30S ribosomal subunit.

This is Small ribosomal subunit protein uS15 from Pyrococcus furiosus (strain ATCC 43587 / DSM 3638 / JCM 8422 / Vc1).